The following is a 157-amino-acid chain: Protein Smg homolog (157 aa).

The protein belongs to the Smg family.

The protein is Protein Smg homolog of Shewanella sediminis (strain HAW-EB3).